The primary structure comprises 207 residues: GTP-binding protein Rheb homolog 1 (207 aa).

Positions 25, 26, 27, 42, 45, 126, 129, and 157 each coordinate GTP. Serine 27 serves as a coordination point for Mg(2+). The Effector region motif lies at 42–50; that stretch reads YESTIEDQH. Threonine 45 provides a ligand contact to Mg(2+). Residues 180 to 193 are compositionally biased toward polar residues; that stretch reads NLSPTERPNGNSPK. A disordered region spans residues 180–207; sequence NLSPTERPNGNSPKRNPFKDDGKPCSIS. Positions 196-207 are enriched in basic and acidic residues; sequence PFKDDGKPCSIS. Cysteine 204 bears the Cysteine methyl ester mark. The S-farnesyl cysteine moiety is linked to residue cysteine 204. A propeptide spans 205–207 (removed in mature form); the sequence is SIS.

The protein belongs to the small GTPase superfamily. Rheb family.

The protein resides in the cell membrane. The catalysed reaction is GTP + H2O = GDP + phosphate + H(+). Functionally, binds GTP and exhibits intrinsic GTPase activity. This is GTP-binding protein Rheb homolog 1 (rheb-1) from Caenorhabditis elegans.